A 255-amino-acid polypeptide reads, in one-letter code: Imidazole glycerol phosphate synthase subunit HisF (255 aa).

Residues D12 and D131 contribute to the active site.

Belongs to the HisA/HisF family. Heterodimer of HisH and HisF.

The protein localises to the cytoplasm. It catalyses the reaction 5-[(5-phospho-1-deoxy-D-ribulos-1-ylimino)methylamino]-1-(5-phospho-beta-D-ribosyl)imidazole-4-carboxamide + L-glutamine = D-erythro-1-(imidazol-4-yl)glycerol 3-phosphate + 5-amino-1-(5-phospho-beta-D-ribosyl)imidazole-4-carboxamide + L-glutamate + H(+). Its pathway is amino-acid biosynthesis; L-histidine biosynthesis; L-histidine from 5-phospho-alpha-D-ribose 1-diphosphate: step 5/9. Its function is as follows. IGPS catalyzes the conversion of PRFAR and glutamine to IGP, AICAR and glutamate. The HisF subunit catalyzes the cyclization activity that produces IGP and AICAR from PRFAR using the ammonia provided by the HisH subunit. The sequence is that of Imidazole glycerol phosphate synthase subunit HisF from Sphingopyxis alaskensis (strain DSM 13593 / LMG 18877 / RB2256) (Sphingomonas alaskensis).